A 273-amino-acid chain; its full sequence is WIMGHMVNAIAQIDEFVNLGANSIETDVSFDDSANPEYTYHGVPCDCGRTCTKWEYFNEFLKGLRKATTPGDSKYHEKLVLVVFDLKTSSLYDNQASDAGKKLAKSLLQNYWNNGNNGGRAYIVLSIPNLAHYKLTTGFKETLTSEGHPELMDKVGYDFSGNDEIGDVAKTYKKAGVTGHVWQSDGITNCLLRGLDRVRKAVANRDSSNGYINKVHYWTVDKRATTRDALDAGVDGIMTNYPDVIADVLNESAYKAKFRIASYDDNPWETFKN.

Residue His-5 is part of the active site. The Mg(2+) site is built by Glu-25 and Asp-27. His-41 serves as the catalytic Nucleophile. Disulfide bonds link Cys-45–Cys-51 and Cys-47–Cys-190. Asp-85 is a binding site for Mg(2+). An N-linked (GlcNAc...) asparagine glycan is attached at Asn-250.

The protein belongs to the arthropod phospholipase D family. Class II subfamily. The cofactor is Mg(2+). Expressed by the venom gland.

It is found in the secreted. It carries out the reaction an N-(acyl)-sphingosylphosphocholine = an N-(acyl)-sphingosyl-1,3-cyclic phosphate + choline. The catalysed reaction is an N-(acyl)-sphingosylphosphoethanolamine = an N-(acyl)-sphingosyl-1,3-cyclic phosphate + ethanolamine. It catalyses the reaction a 1-acyl-sn-glycero-3-phosphocholine = a 1-acyl-sn-glycero-2,3-cyclic phosphate + choline. The enzyme catalyses a 1-acyl-sn-glycero-3-phosphoethanolamine = a 1-acyl-sn-glycero-2,3-cyclic phosphate + ethanolamine. Functionally, dermonecrotic toxins cleave the phosphodiester linkage between the phosphate and headgroup of certain phospholipids (sphingolipid and lysolipid substrates), forming an alcohol (often choline) and a cyclic phosphate. This toxin acts on sphingomyelin (SM). It may also act on ceramide phosphoethanolamine (CPE), lysophosphatidylcholine (LPC) and lysophosphatidylethanolamine (LPE), but not on lysophosphatidylserine (LPS), and lysophosphatidylglycerol (LPG). It acts by transphosphatidylation, releasing exclusively cyclic phosphate products as second products. Induces dermonecrosis, hemolysis, increased vascular permeability, edema, inflammatory response, and platelet aggregation. The sequence is that of Dermonecrotic toxin LdSicTox-alphaIB1av from Loxosceles deserta (Desert recluse spider).